We begin with the raw amino-acid sequence, 166 residues long: Cyanate hydratase (166 aa).

Catalysis depends on residues R92, E95, and S118.

The protein belongs to the cyanase family.

The enzyme catalyses cyanate + hydrogencarbonate + 3 H(+) = NH4(+) + 2 CO2. In terms of biological role, catalyzes the reaction of cyanate with bicarbonate to produce ammonia and carbon dioxide. The chain is Cyanate hydratase from Sorghum bicolor (Sorghum).